The chain runs to 401 residues: MRNIIVEPLNQTPIEDQKVEIVERKGIGHPDSISDGIAESVSRALCNAYLDRFGAIMHHNTDEVQITAGESAPQFGGGEVIKPIEILLTGRGIAEVDGEKIGLDRIAISAAKEYLRDNIINLDVETCTVVECKIGHGSGDLRDVFARKGRAPLSNDTSFGVGFAPFSETERIVMEAENLLNSPEFKKKYPAVGEDIKVMGLRENDNITLTVACAMVDRYVSDLEEYLEIKNVVKDEVFKLASGITERNLEVFVNTADRCEDDEPSVYITVTGTSAEMGDDGSVGRGNRANGLITPNRPMSMEATSGKNPINHVGKIYNLLSNQMAADIVESIEGVKQVHIMILSQIGKPIDHPKAATAQVILEDGYTMDDITGKVSGVMDAWLEDIPSITEMLVKGQLRTF.

Residue 135-140 (GHGSGD) participates in ATP binding.

It belongs to the AdoMet synthase 2 family. Mg(2+) is required as a cofactor.

The enzyme catalyses L-methionine + ATP + H2O = S-adenosyl-L-methionine + phosphate + diphosphate. Its pathway is amino-acid biosynthesis; S-adenosyl-L-methionine biosynthesis; S-adenosyl-L-methionine from L-methionine: step 1/1. In terms of biological role, catalyzes the formation of S-adenosylmethionine from methionine and ATP. This is S-adenosylmethionine synthase (mat) from Methanothermobacter marburgensis (strain ATCC BAA-927 / DSM 2133 / JCM 14651 / NBRC 100331 / OCM 82 / Marburg) (Methanobacterium thermoautotrophicum).